The sequence spans 88 residues: MGFTDETVRFNLDDSNKKEISETLTDVYTSLNEKGYNPINQIVGYVLSGDPAYVPRYNNARNQIRKYERDEIVEELVRYYLKGQGIDL.

The protein belongs to the UPF0297 family.

In Streptococcus gordonii (strain Challis / ATCC 35105 / BCRC 15272 / CH1 / DL1 / V288), this protein is UPF0297 protein SGO_2042.